Reading from the N-terminus, the 201-residue chain is Lipopolysaccharide core heptose(II)-phosphate phosphatase (201 aa).

The first 35 residues, 1 to 35 (MLAFTLRFIKNKRYLATLAGALVIIAGLTSQHAWS), serve as a signal peptide directing secretion.

The protein belongs to the phosphoglycerate mutase family. Ais subfamily.

The protein resides in the periplasm. It functions in the pathway bacterial outer membrane biogenesis; lipopolysaccharide metabolism. Catalyzes the dephosphorylation of heptose(II) of the outer membrane lipopolysaccharide core. The sequence is that of Lipopolysaccharide core heptose(II)-phosphate phosphatase from Salmonella schwarzengrund (strain CVM19633).